We begin with the raw amino-acid sequence, 353 residues long: Alcohol dehydrogenase 1 (353 aa).

Zn(2+)-binding residues include C47, H70, C101, C104, C107, C115, and C157. NAD(+) is bound by residues 181-187 (GAGGGLG), D205, K210, 274-276 (IGL), and R346.

Belongs to the zinc-containing alcohol dehydrogenase family. As to quaternary structure, homotetramer. The cofactor is Zn(2+).

It is found in the cytoplasm. It catalyses the reaction a primary alcohol + NAD(+) = an aldehyde + NADH + H(+). It carries out the reaction a secondary alcohol + NAD(+) = a ketone + NADH + H(+). In Neurospora crassa (strain ATCC 24698 / 74-OR23-1A / CBS 708.71 / DSM 1257 / FGSC 987), this protein is Alcohol dehydrogenase 1 (adh-1).